The primary structure comprises 246 residues: UDP-N-acetyl-D-mannosaminuronic acid transferase (246 aa).

Belongs to the glycosyltransferase 26 family.

It catalyses the reaction UDP-N-acetyl-alpha-D-mannosaminouronate + N-acetyl-alpha-D-glucosaminyl-di-trans,octa-cis-undecaprenyl diphosphate = beta-D-ManNAcA-(1-&gt;4)-alpha-D-GlcNAc-di-trans,octa-cis-undecaprenyl diphosphate + UDP + H(+). The protein operates within bacterial outer membrane biogenesis; enterobacterial common antigen biosynthesis. In terms of biological role, catalyzes the synthesis of Und-PP-GlcNAc-ManNAcA (Lipid II), the second lipid-linked intermediate involved in enterobacterial common antigen (ECA) synthesis. In Escherichia coli O7:K1 (strain IAI39 / ExPEC), this protein is UDP-N-acetyl-D-mannosaminuronic acid transferase.